We begin with the raw amino-acid sequence, 307 residues long: Methionyl-tRNA formyltransferase (307 aa).

S109 to P112 serves as a coordination point for (6S)-5,6,7,8-tetrahydrofolate.

It belongs to the Fmt family.

It carries out the reaction L-methionyl-tRNA(fMet) + (6R)-10-formyltetrahydrofolate = N-formyl-L-methionyl-tRNA(fMet) + (6S)-5,6,7,8-tetrahydrofolate + H(+). Its function is as follows. Attaches a formyl group to the free amino group of methionyl-tRNA(fMet). The formyl group appears to play a dual role in the initiator identity of N-formylmethionyl-tRNA by promoting its recognition by IF2 and preventing the misappropriation of this tRNA by the elongation apparatus. This is Methionyl-tRNA formyltransferase from Dechloromonas aromatica (strain RCB).